Here is a 513-residue protein sequence, read N- to C-terminus: ATP synthase subunit alpha (513 aa).

Residue 169 to 176 (GDRQTGKT) participates in ATP binding.

Belongs to the ATPase alpha/beta chains family. As to quaternary structure, F-type ATPases have 2 components, CF(1) - the catalytic core - and CF(0) - the membrane proton channel. CF(1) has five subunits: alpha(3), beta(3), gamma(1), delta(1), epsilon(1). CF(0) has three main subunits: a(1), b(2) and c(9-12). The alpha and beta chains form an alternating ring which encloses part of the gamma chain. CF(1) is attached to CF(0) by a central stalk formed by the gamma and epsilon chains, while a peripheral stalk is formed by the delta and b chains.

Its subcellular location is the cell inner membrane. The enzyme catalyses ATP + H2O + 4 H(+)(in) = ADP + phosphate + 5 H(+)(out). Functionally, produces ATP from ADP in the presence of a proton gradient across the membrane. The alpha chain is a regulatory subunit. The sequence is that of ATP synthase subunit alpha from Methylobacillus flagellatus (strain ATCC 51484 / DSM 6875 / VKM B-1610 / KT).